The following is a 264-amino-acid chain: S-adenosylmethionine decarboxylase proenzyme (264 aa).

Residue Ser113 is the Schiff-base intermediate with substrate; via pyruvic acid of the active site. A Pyruvic acid (Ser); by autocatalysis modification is found at Ser113. Catalysis depends on His118, which acts as the Proton acceptor; for processing activity. Residue Cys141 is the Proton donor; for catalytic activity of the active site.

The protein belongs to the prokaryotic AdoMetDC family. Type 2 subfamily. In terms of assembly, heterooctamer of four alpha and four beta chains arranged as a tetramer of alpha/beta heterodimers. The cofactor is pyruvate. In terms of processing, is synthesized initially as an inactive proenzyme. Formation of the active enzyme involves a self-maturation process in which the active site pyruvoyl group is generated from an internal serine residue via an autocatalytic post-translational modification. Two non-identical subunits are generated from the proenzyme in this reaction, and the pyruvate is formed at the N-terminus of the alpha chain, which is derived from the carboxyl end of the proenzyme. The post-translation cleavage follows an unusual pathway, termed non-hydrolytic serinolysis, in which the side chain hydroxyl group of the serine supplies its oxygen atom to form the C-terminus of the beta chain, while the remainder of the serine residue undergoes an oxidative deamination to produce ammonia and the pyruvoyl group blocking the N-terminus of the alpha chain.

It catalyses the reaction S-adenosyl-L-methionine + H(+) = S-adenosyl 3-(methylsulfanyl)propylamine + CO2. It functions in the pathway amine and polyamine biosynthesis; S-adenosylmethioninamine biosynthesis; S-adenosylmethioninamine from S-adenosyl-L-methionine: step 1/1. In terms of biological role, catalyzes the decarboxylation of S-adenosylmethionine to S-adenosylmethioninamine (dcAdoMet), the propylamine donor required for the synthesis of the polyamines spermine and spermidine from the diamine putrescine. This chain is S-adenosylmethionine decarboxylase proenzyme, found in Pseudomonas syringae pv. tomato (strain ATCC BAA-871 / DC3000).